We begin with the raw amino-acid sequence, 475 residues long: Erythroid membrane-associated protein (475 aa).

The N-terminal stretch at 1 to 29 (MEMASSAGSWLSGCLIPLVFLRLSVHVSG) is a signal peptide. Positions 30-140 (HAGDAGKFHV…GNLSKEDTVI (111 aa)) constitute an Ig-like V-type domain. Residues 30–155 (HAGDAGKFHV…PSVGSLSPSA (126 aa)) lie on the Extracellular side of the membrane. Cys-50 and Cys-126 are joined by a disulfide. An N-linked (GlcNAc...) asparagine glycan is attached at Asn-132. Residues 156-176 (VALAVILPVLVLLIMVCLCLI) form a helical membrane-spanning segment. The Cytoplasmic segment spans residues 177–475 (WKQRRAKEKL…ALQELKAPSF (299 aa)). The B30.2/SPRY domain maps to 220–418 (KLKRAAANSG…LVICSELHKS (199 aa)). Ser-418 is modified (phosphoserine).

It belongs to the immunoglobulin superfamily. BTN/MOG family. Post-translationally, glycosylated. Expressed in erythroid-enriched bone marrow (at protein level). Highly expressed in bone marrow and to a lower extent in leukocytes, thymus, lymph node and spleen.

It is found in the cell membrane. Its subcellular location is the cytoplasm. Functionally, possible role as a cell-adhesion or receptor molecule of erythroid cells. The sequence is that of Erythroid membrane-associated protein (ERMAP) from Homo sapiens (Human).